The sequence spans 248 residues: Myelin protein P0 (248 aa).

The signal sequence occupies residues 1-29 (MAPGAPSSSPSPILAALLFSSLVLSPTLA). The region spanning 30 to 143 (IVVYTDREVY…DIVGKTSQVT (114 aa)) is the Ig-like V-type domain. The Extracellular portion of the chain corresponds to 30–153 (IVVYTDREVY…LYVFEKVPTR (124 aa)). An intrachain disulfide couples Cys-50 to Cys-127. An N-linked (GlcNAc...) (complex) asparagine glycan is attached at Asn-122. The chain crosses the membrane as a helical span at residues 154–179 (YGVVLGAVIGGILGVVLLLLLLFYLI). The Cytoplasmic portion of the chain corresponds to 180 to 248 (RYCWLRRQAA…GLGESRKDKK (69 aa)). The residue at position 210 (Ser-210) is a Phosphoserine; by PKC. The interval 222–248 (MLDHSRSTKAASEKKSKGLGESRKDKK) is disordered. Residues 224–248 (DHSRSTKAASEKKSKGLGESRKDKK) show a composition bias toward basic and acidic residues. Phosphoserine is present on residues Ser-226 and Ser-228. Position 233 is a phosphoserine; by PKC (Ser-233). The residue at position 237 (Ser-237) is a Phosphoserine. Ser-243 is subject to Phosphoserine; by PKC.

The protein belongs to the myelin P0 protein family. As to quaternary structure, homodimer and homotetramer. N-glycosylated; contains sulfate-substituted glycan. As to expression, found only in peripheral nervous system Schwann cells.

The protein resides in the cell membrane. In terms of biological role, is an adhesion molecule necessary for normal myelination in the peripheral nervous system. It mediates adhesion between adjacent myelin wraps and ultimately drives myelin compaction. The protein is Myelin protein P0 (Mpz) of Rattus norvegicus (Rat).